We begin with the raw amino-acid sequence, 385 residues long: Guanine nucleotide-binding protein alpha-5 subunit (385 aa).

Residue glycine 2 is the site of N-myristoyl glycine attachment. Residue cysteine 6 is the site of S-palmitoyl cysteine attachment. Residues 32-385 form the G-alpha domain; sequence RKIKMLLLGV…GKNYEDTNLE (354 aa). Residues 35–48 are G1 motif; that stretch reads KMLLLGVTDSGKST. GTP-binding positions include 40 to 47, 174 to 180, 199 to 203, 298 to 301, and alanine 357; these read GVTDSGKS, IHMRQTT, DVGGQ, and NKKD. 2 residues coordinate Mg(2+): serine 47 and threonine 180. A G2 motif region spans residues 172–180; sequence DLIHMRQTT. A G3 motif region spans residues 195–204; that stretch reads IRLIDVGGQK. Residues 294–301 are G4 motif; sequence MLFLNKKD. The tract at residues 355-360 is G5 motif; sequence TQATVT.

This sequence belongs to the G-alpha family. As to quaternary structure, g proteins are composed of 3 units; alpha, beta and gamma. The alpha chain contains the guanine nucleotide binding site.

In terms of biological role, guanine nucleotide-binding proteins (G proteins) are involved as modulators or transducers in various transmembrane signaling systems. The chain is Guanine nucleotide-binding protein alpha-5 subunit (gpa-5) from Caenorhabditis elegans.